We begin with the raw amino-acid sequence, 128 residues long: Small ribosomal subunit protein uS9 (128 aa).

Belongs to the universal ribosomal protein uS9 family.

The polypeptide is Small ribosomal subunit protein uS9 (Flavobacterium psychrophilum (strain ATCC 49511 / DSM 21280 / CIP 103535 / JIP02/86)).